The sequence spans 335 residues: DNA-directed RNA polymerase subunit alpha (335 aa).

The interval 1 to 233 (MQRNWRELIK…DQLTIFINFE (233 aa)) is alpha N-terminal domain (alpha-NTD). The segment at 249-335 (FNDHLFRSVD…DIENRRKEQE (87 aa)) is alpha C-terminal domain (alpha-CTD).

The protein belongs to the RNA polymerase alpha chain family. In terms of assembly, homodimer. The RNAP catalytic core consists of 2 alpha, 1 beta, 1 beta' and 1 omega subunit. When a sigma factor is associated with the core the holoenzyme is formed, which can initiate transcription.

The enzyme catalyses RNA(n) + a ribonucleoside 5'-triphosphate = RNA(n+1) + diphosphate. Its function is as follows. DNA-dependent RNA polymerase catalyzes the transcription of DNA into RNA using the four ribonucleoside triphosphates as substrates. The polypeptide is DNA-directed RNA polymerase subunit alpha (Syntrophobacter fumaroxidans (strain DSM 10017 / MPOB)).